A 104-amino-acid chain; its full sequence is Large ribosomal subunit protein bL21 (104 aa).

This sequence belongs to the bacterial ribosomal protein bL21 family. As to quaternary structure, part of the 50S ribosomal subunit. Contacts protein L20.

Its function is as follows. This protein binds to 23S rRNA in the presence of protein L20. The sequence is that of Large ribosomal subunit protein bL21 from Leptospira borgpetersenii serovar Hardjo-bovis (strain JB197).